The following is a 218-amino-acid chain: PKHD-type hydroxylase Sala_1910 (218 aa).

Residues 74 to 172 (RIAPPLLTRY…RLVAITFIQS (99 aa)) form the Fe2OG dioxygenase domain. Fe cation contacts are provided by His-92, Asp-94, and His-153. Arg-163 lines the 2-oxoglutarate pocket.

It depends on Fe(2+) as a cofactor. L-ascorbate serves as cofactor.

The chain is PKHD-type hydroxylase Sala_1910 from Sphingopyxis alaskensis (strain DSM 13593 / LMG 18877 / RB2256) (Sphingomonas alaskensis).